Reading from the N-terminus, the 247-residue chain is Cell division protein ZapD (247 aa).

The protein belongs to the ZapD family. As to quaternary structure, interacts with FtsZ.

The protein localises to the cytoplasm. Functionally, cell division factor that enhances FtsZ-ring assembly. Directly interacts with FtsZ and promotes bundling of FtsZ protofilaments, with a reduction in FtsZ GTPase activity. In Klebsiella pneumoniae (strain 342), this protein is Cell division protein ZapD.